A 133-amino-acid chain; its full sequence is Vesicle transport protein GOT1A (133 aa).

The Cytoplasmic segment spans residues 1-9; that stretch reads MISITEWQK. Residues 10–30 traverse the membrane as a helical segment; it reads IGVGITGFGVFFILFGILLYF. Position 31 (Asp-31) is a topological domain, lumenal. Residues 32–52 form a helical membrane-spanning segment; the sequence is SVLLAFGNLLFLTGLSLIIGL. At 53–68 the chain is on the cytoplasmic side; the sequence is RRTFAFFFQRHKLKGT. The helical transmembrane segment at 69–89 threads the bilayer; the sequence is SFFLGGVAIVLLRWPLLGMLL. At 90 to 92 the chain is on the lumenal side; that stretch reads EAY. The helical transmembrane segment at 93–113 threads the bilayer; that stretch reads GFISLFKGFFPVVFGFLGSAF. The Cytoplasmic portion of the chain corresponds to 114 to 133; the sequence is NIPFLSTLFQKLQGSSSSMV.

The protein belongs to the GOT1 family.

It is found in the golgi apparatus membrane. May be involved in fusion of ER-derived transport vesicles with the Golgi complex. This Mus musculus (Mouse) protein is Vesicle transport protein GOT1A.